Consider the following 858-residue polypeptide: Toll-like receptor 5 (858 aa).

Residues 1–20 (MGDHLDLLLGVVLMAGPVFG) form the signal peptide. At 21-639 (IPSCSFDGRI…DEEEVLKSLK (619 aa)) the chain is on the extracellular side. Residues asparagine 37 and asparagine 46 are each glycosylated (N-linked (GlcNAc...) asparagine). 9 LRR repeats span residues 45–68 (LNTT…SFPF), 71–93 (QLQL…AFRN), 95–117 (PNLR…AFQG), 120–143 (HLFE…YFRN), 146–166 (ALTR…HPSF), 171–192 (SLKS…ELEP), 197–211 (TLSF…LYSR), 214–229 (VDWG…MVLE), and 234–235 (SG). Asparagine 245 carries N-linked (GlcNAc...) asparagine glycosylation. 11 LRR repeats span residues 260 to 284 (LAHH…TFAG), 289 to 301 (SVRH…GFVF), 313 to 334 (DLKV…AFYG), 337 to 355 (NLQV…YSSN), 385 to 401 (KLQT…TIHF), 412 to 431 (GNKL…IHLS), 449 to 470 (HLQI…QTPS), 474 to 495 (SLEQ…ELCW), 503 to 524 (HLQV…VFSH), 527 to 546 (ALRG…HNDL), and 549 to 567 (NLEI…NPDV). Asparagine 342 carries N-linked (GlcNAc...) asparagine glycosylation. A glycan (N-linked (GlcNAc...) asparagine) is linked at asparagine 422. The region spanning 579-631 (NKFICECELSTFINWLNHTNVTIAGPPADIYCVYPDSFSGVSLFSLSTEGCDE) is the LRRCT domain. Cystine bridges form between cysteine 583/cysteine 610 and cysteine 585/cysteine 629. N-linked (GlcNAc...) asparagine glycosylation is found at asparagine 595 and asparagine 598. Residues 640–660 (FSLFIVCTVTLTLFLMTILTV) form a helical membrane-spanning segment. Residues 661–858 (TKFRGFCFIC…IPLQTVATIS (198 aa)) lie on the Cytoplasmic side of the membrane. One can recognise a TIR domain in the interval 691-836 (YKYDAYLCFS…WFLHKLSQQI (146 aa)). Phosphotyrosine is present on tyrosine 798. Serine 805 carries the post-translational modification Phosphoserine; by PKD/PRKD1.

The protein belongs to the Toll-like receptor family. Homodimer. Interacts with MYD88 (via TIR domain). Interacts with TICAM1 (via TIR domain). Interacts with UNC93B1; this interaction is essential for proper TLR5 localization to the plasma membrane. In terms of processing, phosphorylated at Ser-805 by PKD/PRKD1; phosphorylation induces the production of inflammatory cytokines. Phosphorylated at Tyr-798 upon flagellin binding; required for signaling. In terms of tissue distribution, highly expressed on the basolateral surface of intestinal epithelia. Expressed also in other cells such as lung epithelial cells.

It localises to the cell membrane. Pattern recognition receptor (PRR) located on the cell surface that participates in the activation of innate immunity and inflammatory response. Recognizes small molecular motifs named pathogen-associated molecular pattern (PAMPs) expressed by pathogens and microbe-associated molecular patterns (MAMPs) usually expressed by resident microbiota. Upon ligand binding such as bacterial flagellins, recruits intracellular adapter proteins MYD88 and TRIF leading to NF-kappa-B activation, cytokine secretion and induction of the inflammatory response. Plays thereby an important role in the relationship between the intestinal epithelium and enteric microbes and contributes to the gut microbiota composition throughout life. The protein is Toll-like receptor 5 (TLR5) of Homo sapiens (Human).